Reading from the N-terminus, the 318-residue chain is Phospho-N-acetylmuramoyl-pentapeptide-transferase (318 aa).

10 helical membrane passes run 5-25 (LKPL…VLAF), 50-70 (PTMG…VLAP), 71-91 (PSPL…IGLV), 115-135 (VLLG…GSVI), 139-159 (VTGW…LLLV), 173-193 (GLAA…ALTL), 198-218 (LVTF…YNFH), 222-242 (VFMG…LAIM), 248-268 (VLPV…LQVV), and 298-318 (VLFF…LLTI).

This sequence belongs to the glycosyltransferase 4 family. MraY subfamily. Mg(2+) serves as cofactor.

The protein resides in the cell membrane. The enzyme catalyses UDP-N-acetyl-alpha-D-muramoyl-L-alanyl-gamma-D-glutamyl-meso-2,6-diaminopimeloyl-D-alanyl-D-alanine + di-trans,octa-cis-undecaprenyl phosphate = di-trans,octa-cis-undecaprenyl diphospho-N-acetyl-alpha-D-muramoyl-L-alanyl-D-glutamyl-meso-2,6-diaminopimeloyl-D-alanyl-D-alanine + UMP. The protein operates within cell wall biogenesis; peptidoglycan biosynthesis. In terms of biological role, catalyzes the initial step of the lipid cycle reactions in the biosynthesis of the cell wall peptidoglycan: transfers peptidoglycan precursor phospho-MurNAc-pentapeptide from UDP-MurNAc-pentapeptide onto the lipid carrier undecaprenyl phosphate, yielding undecaprenyl-pyrophosphoryl-MurNAc-pentapeptide, known as lipid I. The polypeptide is Phospho-N-acetylmuramoyl-pentapeptide-transferase (Moorella thermoacetica (strain ATCC 39073 / JCM 9320)).